The sequence spans 392 residues: Multidrug resistance protein MdtL (392 aa).

A run of 12 helical transmembrane segments spans residues 4–24 (FLLC…MYLV), 38–58 (AQLH…MLFA), 69–89 (PVAI…AQVH), 95–115 (LIGR…AFAI), 131–151 (LLNG…HLIM), 158–178 (SLFY…VFIL), 209–229 (LLIT…SPVL), 246–266 (ALMA…LSLF), 270–290 (TLML…SLAT), 294–314 (VTLI…GVAM), 331–351 (VLGI…AIIG), and 357–377 (MLIG…LVVT).

The protein belongs to the major facilitator superfamily. DHA1 family. MdtL (TC 2.A.1.2.22) subfamily.

The protein resides in the cell inner membrane. This is Multidrug resistance protein MdtL from Klebsiella pneumoniae subsp. pneumoniae (strain ATCC 700721 / MGH 78578).